The following is a 222-amino-acid chain: Histidine biosynthesis bifunctional protein HisIE (222 aa).

Positions 1-128 (MQPLSPAFID…SNALSPPADA (128 aa)) are phosphoribosyl-AMP cyclohydrolase. Residues 129-222 (CTELFRVIES…AARRGAPRRH (94 aa)) are phosphoribosyl-ATP pyrophosphohydrolase.

In the N-terminal section; belongs to the PRA-CH family. This sequence in the C-terminal section; belongs to the PRA-PH family.

It localises to the cytoplasm. It carries out the reaction 1-(5-phospho-beta-D-ribosyl)-ATP + H2O = 1-(5-phospho-beta-D-ribosyl)-5'-AMP + diphosphate + H(+). It catalyses the reaction 1-(5-phospho-beta-D-ribosyl)-5'-AMP + H2O = 1-(5-phospho-beta-D-ribosyl)-5-[(5-phospho-beta-D-ribosylamino)methylideneamino]imidazole-4-carboxamide. It functions in the pathway amino-acid biosynthesis; L-histidine biosynthesis; L-histidine from 5-phospho-alpha-D-ribose 1-diphosphate: step 2/9. The protein operates within amino-acid biosynthesis; L-histidine biosynthesis; L-histidine from 5-phospho-alpha-D-ribose 1-diphosphate: step 3/9. The polypeptide is Histidine biosynthesis bifunctional protein HisIE (Parasynechococcus marenigrum (strain WH8102)).